The chain runs to 342 residues: Phomopsin biosynthesis cluster protein B' (342 aa).

Residues 1–22 (MESIAKAKSLPNKGRTYDSQRP) are disordered. Residues 87 to 107 (VLIIGCAVISLFAIIGALGFA) traverse the membrane as a helical segment. The segment at 118–186 (CASPAHQNPH…QCGESPDEAQ (69 aa)) is disordered. The span at 144–155 (HSGSHSSSSSTN) shows a compositional bias: low complexity. N248 is a glycosylation site (N-linked (GlcNAc...) asparagine).

It is found in the membrane. Functionally, part of the gene cluster that mediates the biosynthesis of the phomopsins, a group of hexapeptide mycotoxins which infects lupins and causes lupinosis disease in livestock. The role of phomB' within the phomopsins biosynthesis pathway has still to be determined. The pathway starts with the processing of the precursor phomA by several endopeptidases including kexin proteases as well as the cluster-specific S41 family peptidase phomP1 and the oligopeptidase phomG to produce 10 identical copies of the hexapeptide Tyr-Val-Ile-Pro-Ile-Asp. After being excised from the precursor peptide, the core peptides are cyclized and modified post-translationally by enzymes encoded within the gene cluster. The timing and order of proteolysis of the phomA precursor and PTMs are still unknown. Two tyrosinase-like enzymes, phomQ1 and phomQ2, catalyze the chlorination and hydroxylation of Tyr, respectively. PhomYb, is proposed to be involved in the construction of the macrocyclic structure. The other 4 ustYa family proteins may be involved in PTMs that generate the unique structure of phomopsin A. PhomYa is required for the hydroxylation of C-beta of Tyr. PhomYc, phomYd, and phomYe are responsible for the biosynthesis of 2,3-dehydroisoleucine (dIle), 2,3-dehydroaspartic acid (dAsp), and 3,4-dehydroproline (dPro), respectively. While dIle formation by phomYc is indispensable for the installation of dAsp by phomYd, the order of the other PTMs have not been elucidated yet. Most of the biosynthetic enzymes likely have broad substrate specificity, and thus, there might be a metabolic grid from a precursor to phomopsin A. The enzyme(s) responsible for the biosynthesis of 3,4-dehydrovaline (dVal) have also not been identified yet. Finally, phomM acts as an S-adenosylmethionine-dependent alpha-N-methyltransferase that catalyzes two successive N-methylation reactions, converting N-desmethyl-phomopsin A to phomopsin A and phomopsin A further to an N,N-dimethylated congener called phomopsin E. This is Phomopsin biosynthesis cluster protein B' from Diaporthe leptostromiformis (Lupinosis disease fungus).